We begin with the raw amino-acid sequence, 274 residues long: N-acetylmuramic acid 6-phosphate etherase (274 aa).

The SIS domain occupies 54-217 (IIPRIDSGGR…STSVMIKLGR (164 aa)). The active-site Proton donor is the Glu-82. Glu-113 is a catalytic residue.

This sequence belongs to the GCKR-like family. MurNAc-6-P etherase subfamily. In terms of assembly, homodimer.

The enzyme catalyses N-acetyl-D-muramate 6-phosphate + H2O = N-acetyl-D-glucosamine 6-phosphate + (R)-lactate. It participates in amino-sugar metabolism; N-acetylmuramate degradation. Functionally, specifically catalyzes the cleavage of the D-lactyl ether substituent of MurNAc 6-phosphate, producing GlcNAc 6-phosphate and D-lactate. The protein is N-acetylmuramic acid 6-phosphate etherase of Christiangramia forsetii (strain DSM 17595 / CGMCC 1.15422 / KT0803) (Gramella forsetii).